Reading from the N-terminus, the 514-residue chain is Citrate synthase 2, peroxisomal (514 aa).

Active-site residues include histidine 324, histidine 363, and aspartate 419.

It belongs to the citrate synthase family. In terms of tissue distribution, widely expressed. Expressed throughout the shoot. Expressed in flower, silique, stem, cauline leaf, young leaf, mature leaf and senescent leaf.

The protein localises to the peroxisome. The enzyme catalyses oxaloacetate + acetyl-CoA + H2O = citrate + CoA + H(+). The protein operates within carbohydrate metabolism; tricarboxylic acid cycle; isocitrate from oxaloacetate: step 1/2. Its function is as follows. Peroxisomal citrate synthase required for the fatty acid respiration in seedlings, citrate being exported from peroxisomes into mitochondria during respiration of triacylglycerol (TAG). Indeed, complete respiration requires the transfer of carbon in the form of citrate from the peroxisome to the mitochondria. The protein is Citrate synthase 2, peroxisomal (CSY2) of Arabidopsis thaliana (Mouse-ear cress).